Reading from the N-terminus, the 378-residue chain is Valine--tRNA ligase (378 aa).

A coiled-coil region spans residues 307–377 (AGFINKEAEL…IQEQYKAIEA (71 aa)).

This sequence belongs to the class-I aminoacyl-tRNA synthetase family. ValS type 1 subfamily. In terms of assembly, monomer.

The protein localises to the cytoplasm. It catalyses the reaction tRNA(Val) + L-valine + ATP = L-valyl-tRNA(Val) + AMP + diphosphate. In terms of biological role, catalyzes the attachment of valine to tRNA(Val). As ValRS can inadvertently accommodate and process structurally similar amino acids such as threonine, to avoid such errors, it has a 'posttransfer' editing activity that hydrolyzes mischarged Thr-tRNA(Val) in a tRNA-dependent manner. The chain is Valine--tRNA ligase (valS) from Haemophilus parainfluenzae.